The chain runs to 362 residues: UDP-N-acetylglucosamine--N-acetylmuramyl-(pentapeptide) pyrophosphoryl-undecaprenol N-acetylglucosamine transferase (362 aa).

Arg166, Ser196, and Gln290 together coordinate UDP-N-acetyl-alpha-D-glucosamine.

Belongs to the glycosyltransferase 28 family. MurG subfamily.

The protein localises to the cell membrane. It carries out the reaction Mur2Ac(oyl-L-Ala-gamma-D-Glu-L-Lys-D-Ala-D-Ala)-di-trans,octa-cis-undecaprenyl diphosphate + UDP-N-acetyl-alpha-D-glucosamine = beta-D-GlcNAc-(1-&gt;4)-Mur2Ac(oyl-L-Ala-gamma-D-Glu-L-Lys-D-Ala-D-Ala)-di-trans,octa-cis-undecaprenyl diphosphate + UDP + H(+). It participates in cell wall biogenesis; peptidoglycan biosynthesis. In terms of biological role, cell wall formation. Catalyzes the transfer of a GlcNAc subunit on undecaprenyl-pyrophosphoryl-MurNAc-pentapeptide (lipid intermediate I) to form undecaprenyl-pyrophosphoryl-MurNAc-(pentapeptide)GlcNAc (lipid intermediate II). The polypeptide is UDP-N-acetylglucosamine--N-acetylmuramyl-(pentapeptide) pyrophosphoryl-undecaprenol N-acetylglucosamine transferase (Staphylococcus carnosus (strain TM300)).